Consider the following 195-residue polypeptide: Anthranilate synthase component 2 (195 aa).

A Glutamine amidotransferase type-1 domain is found at 1–195 (MILIIDNYDS…LKNFLSLSYG (195 aa)). 52-54 (GPG) is a binding site for L-glutamine. Cys-79 serves as the catalytic Nucleophile; for GATase activity. Residues Gln-83 and 129–130 (SL) contribute to the L-glutamine site. Active-site residues include His-173 and Glu-175.

In terms of assembly, tetramer of two components I and two components II.

Its subcellular location is the plastid. The protein localises to the chloroplast. The catalysed reaction is chorismate + L-glutamine = anthranilate + pyruvate + L-glutamate + H(+). It functions in the pathway amino-acid biosynthesis; L-tryptophan biosynthesis; L-tryptophan from chorismate: step 1/5. This chain is Anthranilate synthase component 2 (trpG), found in Cyanidium caldarium (Red alga).